The sequence spans 632 residues: tRNA uridine 5-carboxymethylaminomethyl modification enzyme MnmG (632 aa).

FAD is bound by residues 16 to 21 (GAGHAG), valine 128, and serine 183. Positions 206-225 (PRVNGNTIDYSKTEEEPGDK) are disordered. Residues 216-225 (SKTEEEPGDK) are compositionally biased toward basic and acidic residues. An NAD(+)-binding site is contributed by 277–291 (GPRYCPSIEDKVVRF). Residue glutamine 374 participates in FAD binding.

Belongs to the MnmG family. In terms of assembly, homodimer. Heterotetramer of two MnmE and two MnmG subunits. The cofactor is FAD.

It localises to the cytoplasm. Its function is as follows. NAD-binding protein involved in the addition of a carboxymethylaminomethyl (cmnm) group at the wobble position (U34) of certain tRNAs, forming tRNA-cmnm(5)s(2)U34. The protein is tRNA uridine 5-carboxymethylaminomethyl modification enzyme MnmG of Lactobacillus acidophilus (strain ATCC 700396 / NCK56 / N2 / NCFM).